Here is a 242-residue protein sequence, read N- to C-terminus: Biosynthetic peptidoglycan transglycosylase (242 aa).

Residues 19-39 (LMVVLAVFWGGGIALFSVAPV) traverse the membrane as a helical segment.

It belongs to the glycosyltransferase 51 family.

It is found in the cell inner membrane. It catalyses the reaction [GlcNAc-(1-&gt;4)-Mur2Ac(oyl-L-Ala-gamma-D-Glu-L-Lys-D-Ala-D-Ala)](n)-di-trans,octa-cis-undecaprenyl diphosphate + beta-D-GlcNAc-(1-&gt;4)-Mur2Ac(oyl-L-Ala-gamma-D-Glu-L-Lys-D-Ala-D-Ala)-di-trans,octa-cis-undecaprenyl diphosphate = [GlcNAc-(1-&gt;4)-Mur2Ac(oyl-L-Ala-gamma-D-Glu-L-Lys-D-Ala-D-Ala)](n+1)-di-trans,octa-cis-undecaprenyl diphosphate + di-trans,octa-cis-undecaprenyl diphosphate + H(+). It functions in the pathway cell wall biogenesis; peptidoglycan biosynthesis. Its function is as follows. Peptidoglycan polymerase that catalyzes glycan chain elongation from lipid-linked precursors. This is Biosynthetic peptidoglycan transglycosylase from Escherichia coli (strain SMS-3-5 / SECEC).